Here is a 68-residue protein sequence, read N- to C-terminus: uncharacterized protein (68 aa).

One can recognise an HMA domain in the interval 2–67; it reads KTITLNIKGI…VIEDAGFDAT (66 aa). Residues Cys13 and Cys16 each coordinate a metal cation.

This is an uncharacterized protein from Haemophilus influenzae (strain ATCC 51907 / DSM 11121 / KW20 / Rd).